Consider the following 168-residue polypeptide: Nicotinamide-nucleotide adenylyltransferase (168 aa).

ATP contacts are provided by R8, F9, H13, H16, F119, R121, Y124, G126, T127, and R130.

It belongs to the archaeal NMN adenylyltransferase family. As to quaternary structure, homohexamer existing as a trimer of dimers.

Its subcellular location is the cytoplasm. It catalyses the reaction beta-nicotinamide D-ribonucleotide + ATP + H(+) = diphosphate + NAD(+). It participates in cofactor biosynthesis; NAD(+) biosynthesis; NAD(+) from nicotinamide D-ribonucleotide: step 1/1. Catalyzes the formation of NAD(+) from nicotinamide mononucleotide (NMN) and ATP. The sequence is that of Nicotinamide-nucleotide adenylyltransferase from Methanocaldococcus jannaschii (strain ATCC 43067 / DSM 2661 / JAL-1 / JCM 10045 / NBRC 100440) (Methanococcus jannaschii).